A 330-amino-acid polypeptide reads, in one-letter code: 4-hydroxythreonine-4-phosphate dehydrogenase (330 aa).

Substrate contacts are provided by His-134 and Thr-135. Positions 164, 209, and 264 each coordinate a divalent metal cation. Substrate-binding residues include Lys-272, Asn-281, and Arg-290.

It belongs to the PdxA family. Homodimer. Zn(2+) is required as a cofactor. Requires Mg(2+) as cofactor. The cofactor is Co(2+).

The protein localises to the cytoplasm. It carries out the reaction 4-(phosphooxy)-L-threonine + NAD(+) = 3-amino-2-oxopropyl phosphate + CO2 + NADH. The protein operates within cofactor biosynthesis; pyridoxine 5'-phosphate biosynthesis; pyridoxine 5'-phosphate from D-erythrose 4-phosphate: step 4/5. Catalyzes the NAD(P)-dependent oxidation of 4-(phosphooxy)-L-threonine (HTP) into 2-amino-3-oxo-4-(phosphooxy)butyric acid which spontaneously decarboxylates to form 3-amino-2-oxopropyl phosphate (AHAP). The sequence is that of 4-hydroxythreonine-4-phosphate dehydrogenase from Pseudoalteromonas translucida (strain TAC 125).